We begin with the raw amino-acid sequence, 293 residues long: Short-chain dehydrogenase/reductase PhomF' (293 aa).

Positions 31 and 102 each coordinate NADP(+). The active-site Proton donor is the S175. NADP(+)-binding residues include Y190, K194, and S225. The active-site Proton acceptor is the Y190. The active-site Lowers pKa of active site Tyr is K194.

This sequence belongs to the short-chain dehydrogenases/reductases (SDR) family.

In terms of biological role, short-chain dehydrogenase/reductase; part of the gene cluster that mediates the biosynthesis of the phomopsins, a group of hexapeptide mycotoxins which infects lupins and causes lupinosis disease in livestock. The role of phomF' within the phomopsins biosynthesis pathway has still to be determined. The pathway starts with the processing of the precursor phomA by several endopeptidases including kexin proteases as well as the cluster-specific S41 family peptidase phomP1 and the oligopeptidase phomG to produce 10 identical copies of the hexapeptide Tyr-Val-Ile-Pro-Ile-Asp. After being excised from the precursor peptide, the core peptides are cyclized and modified post-translationally by enzymes encoded within the gene cluster. The timing and order of proteolysis of the phomA precursor and PTMs are still unknown. Two tyrosinase-like enzymes, phomQ1 and phomQ2, catalyze the chlorination and hydroxylation of Tyr, respectively. PhomYb, is proposed to be involved in the construction of the macrocyclic structure. The other 4 ustYa family proteins may be involved in PTMs that generate the unique structure of phomopsin A. PhomYa is required for the hydroxylation of C-beta of Tyr. PhomYc, phomYd, and phomYe are responsible for the biosynthesis of 2,3-dehydroisoleucine (dIle), 2,3-dehydroaspartic acid (dAsp), and 3,4-dehydroproline (dPro), respectively. While dIle formation by phomYc is indispensable for the installation of dAsp by phomYd, the order of the other PTMs have not been elucidated yet. Most of the biosynthetic enzymes likely have broad substrate specificity, and thus, there might be a metabolic grid from a precursor to phomopsin A. The enzyme(s) responsible for the biosynthesis of 3,4-dehydrovaline (dVal) have also not been identified yet. Finally, phomM acts as an S-adenosylmethionine-dependent alpha-N-methyltransferase that catalyzes two successive N-methylation reactions, converting N-desmethyl-phomopsin A to phomopsin A and phomopsin A further to an N,N-dimethylated congener called phomopsin E. In Diaporthe leptostromiformis (Lupinosis disease fungus), this protein is Short-chain dehydrogenase/reductase PhomF'.